A 639-amino-acid chain; its full sequence is MTSKPNTPLLDQVVFPSDLRKIEDKDMPQVARELRDEMIDAVSVTGGHLGAGLGVVELTLAIHKVFNTPEDRLIFDVGHQCYPHKILTGRRERIRTLRQEHGLSGFTKRAESEYDPFGAAHSSTSISAGLGMAVAAELGQTDRKVIAVIGDGAMSAGMAFEALNNAGALDARLIVILNDNDMSIAPPTGAMSAYLARLASGRTYMGMREIGKKLTAYLGKNIDRAITRAVEHARGYVTGGTMFEEMGFYHIGPIDGHSFDHLLPVLRNVRDNAKGPVLIHVVTQKGKGYAPAEAAADKYHGVNTFDVITGTQAKAKPNAPSYTAVFADALVEEARLDDKIVGITAAMPSGTGLDKLQNLFPERTFDVGIAEQHAVTFAAGLAAEGYKPFCALYSTFLQRGYDQVVHDVAIQGLPVRFPIDRAGFVGADGPTHAGSFDTGFLASLPGFVVMAAADEAELKHMVRTAAAYDEGPISFRYPRGEGVGVQMPERGEILPIGKGRIIKEGSKVALLSFGTRLAECLVAAEDLDAAGLPTTVADARFAKPLDLDLIRQLARHHAVLITVEEGAVGGFGSQVLHMLANEGLLDHGLKVRSLVLPDLWMDQAKPDVMYEKAGLDAKGIVSTVFTALSRDALAQDSLA.

Residues H79 and 120 to 122 (AHS) each bind thiamine diphosphate. D151 serves as a coordination point for Mg(2+). Residues 152 to 153 (GA), N180, Y289, and E371 contribute to the thiamine diphosphate site. N180 serves as a coordination point for Mg(2+).

The protein belongs to the transketolase family. DXPS subfamily. Homodimer. Mg(2+) is required as a cofactor. Thiamine diphosphate serves as cofactor.

It catalyses the reaction D-glyceraldehyde 3-phosphate + pyruvate + H(+) = 1-deoxy-D-xylulose 5-phosphate + CO2. It participates in metabolic intermediate biosynthesis; 1-deoxy-D-xylulose 5-phosphate biosynthesis; 1-deoxy-D-xylulose 5-phosphate from D-glyceraldehyde 3-phosphate and pyruvate: step 1/1. In terms of biological role, catalyzes the acyloin condensation reaction between C atoms 2 and 3 of pyruvate and glyceraldehyde 3-phosphate to yield 1-deoxy-D-xylulose-5-phosphate (DXP). The protein is 1-deoxy-D-xylulose-5-phosphate synthase of Allorhizobium ampelinum (strain ATCC BAA-846 / DSM 112012 / S4) (Agrobacterium vitis (strain S4)).